We begin with the raw amino-acid sequence, 294 residues long: ATP synthase gamma chain (294 aa).

This sequence belongs to the ATPase gamma chain family. As to quaternary structure, F-type ATPases have 2 components, CF(1) - the catalytic core - and CF(0) - the membrane proton channel. CF(1) has five subunits: alpha(3), beta(3), gamma(1), delta(1), epsilon(1). CF(0) has three main subunits: a, b and c.

Its subcellular location is the cell inner membrane. Its function is as follows. Produces ATP from ADP in the presence of a proton gradient across the membrane. The gamma chain is believed to be important in regulating ATPase activity and the flow of protons through the CF(0) complex. The protein is ATP synthase gamma chain of Rhizobium etli (strain CIAT 652).